Consider the following 422-residue polypeptide: Histidine--tRNA ligase (422 aa).

It belongs to the class-II aminoacyl-tRNA synthetase family. As to quaternary structure, homodimer.

It localises to the cytoplasm. It carries out the reaction tRNA(His) + L-histidine + ATP = L-histidyl-tRNA(His) + AMP + diphosphate + H(+). The sequence is that of Histidine--tRNA ligase from Ruthia magnifica subsp. Calyptogena magnifica.